Here is a 272-residue protein sequence, read N- to C-terminus: Putative hydro-lyase RPD_1846 (272 aa).

Belongs to the D-glutamate cyclase family.

This Rhodopseudomonas palustris (strain BisB5) protein is Putative hydro-lyase RPD_1846.